Here is a 236-residue protein sequence, read N- to C-terminus: tRNA1(Val) (adenine(37)-N6)-methyltransferase (236 aa).

This sequence belongs to the methyltransferase superfamily. tRNA (adenine-N(6)-)-methyltransferase family.

It is found in the cytoplasm. The enzyme catalyses adenosine(37) in tRNA1(Val) + S-adenosyl-L-methionine = N(6)-methyladenosine(37) in tRNA1(Val) + S-adenosyl-L-homocysteine + H(+). In terms of biological role, specifically methylates the adenine in position 37 of tRNA(1)(Val) (anticodon cmo5UAC). In Shewanella sp. (strain MR-4), this protein is tRNA1(Val) (adenine(37)-N6)-methyltransferase.